We begin with the raw amino-acid sequence, 126 residues long: Large ribosomal subunit protein uL14m (126 aa).

The protein belongs to the universal ribosomal protein uL14 family. In terms of assembly, component of the mitochondrial large ribosomal subunit (mt-LSU). Mature yeast 74S mitochondrial ribosomes consist of a small (37S) and a large (54S) subunit. The 37S small subunit contains a 15S ribosomal RNA (15S mt-rRNA) and at least 32 different proteins. The 54S large subunit contains a 21S rRNA (21S mt-rRNA) and at least 45 different proteins.

The protein resides in the mitochondrion. In terms of biological role, component of the mitochondrial ribosome (mitoribosome), a dedicated translation machinery responsible for the synthesis of mitochondrial genome-encoded proteins, including at least some of the essential transmembrane subunits of the mitochondrial respiratory chain. The mitoribosomes are attached to the mitochondrial inner membrane and translation products are cotranslationally integrated into the membrane. The chain is Large ribosomal subunit protein uL14m (mrpl38) from Schizosaccharomyces pombe (strain 972 / ATCC 24843) (Fission yeast).